The following is an 835-amino-acid chain: Microcephalin (835 aa).

One can recognise a BRCT 1 domain in the interval 1-93; that stretch reads MAAPILKDVV…AHIDESLFPA (93 aa). A phosphoserine mark is found at Ser279, Ser287, Ser296, and Ser333. Disordered regions lie at residues 313-381 and 419-443; these read PDQK…RRSI and DNLK…AQLS. Thr335 is modified (phosphothreonine). Positions 343–361 are enriched in basic residues; the sequence is LLIHSRPRSSSVKRKRVSH. Residues 434 to 443 show a composition bias toward polar residues; that stretch reads QLPSSPAQLS. The residue at position 548 (Ser548) is a Phosphoserine. A disordered region spans residues 555–584; it reads AVGLKSTQNKGTTSKISNSSEGEAQSEHEP. Polar residues predominate over residues 559-577; that stretch reads KSTQNKGTTSKISNSSEGE. 2 consecutive BRCT domains span residues 640–730 and 751–833; these read SGRG…PFEL and YRGT…NYLL.

Interacts with CDC27 and maybe other components of the APC/C complex. Interacts with histone variant H2AX under DNA damage conditions. In terms of tissue distribution, expressed in fetal brain, liver and kidney.

The protein resides in the cytoplasm. Its subcellular location is the cytoskeleton. It localises to the microtubule organizing center. It is found in the centrosome. Functionally, implicated in chromosome condensation and DNA damage induced cellular responses. May play a role in neurogenesis and regulation of the size of the cerebral cortex. This Homo sapiens (Human) protein is Microcephalin.